The following is a 302-amino-acid chain: 4-diphosphocytidyl-2-C-methyl-D-erythritol kinase (302 aa).

Residue K11 is part of the active site. 93–103 (PVASGLAGGST) provides a ligand contact to ATP. Residue D135 is part of the active site.

The protein belongs to the GHMP kinase family. IspE subfamily.

The catalysed reaction is 4-CDP-2-C-methyl-D-erythritol + ATP = 4-CDP-2-C-methyl-D-erythritol 2-phosphate + ADP + H(+). It functions in the pathway isoprenoid biosynthesis; isopentenyl diphosphate biosynthesis via DXP pathway; isopentenyl diphosphate from 1-deoxy-D-xylulose 5-phosphate: step 3/6. Its function is as follows. Catalyzes the phosphorylation of the position 2 hydroxy group of 4-diphosphocytidyl-2C-methyl-D-erythritol. This is 4-diphosphocytidyl-2-C-methyl-D-erythritol kinase from Gloeobacter violaceus (strain ATCC 29082 / PCC 7421).